A 219-amino-acid polypeptide reads, in one-letter code: Protein-L-isoaspartate O-methyltransferase 2 (219 aa).

Residue Ser60 is part of the active site.

It belongs to the methyltransferase superfamily. L-isoaspartyl/D-aspartyl protein methyltransferase family.

Its subcellular location is the cytoplasm. It catalyses the reaction [protein]-L-isoaspartate + S-adenosyl-L-methionine = [protein]-L-isoaspartate alpha-methyl ester + S-adenosyl-L-homocysteine. Functionally, catalyzes the methyl esterification of L-isoaspartyl residues in peptides and proteins that result from spontaneous decomposition of normal L-aspartyl and L-asparaginyl residues. It plays a role in the repair and/or degradation of damaged proteins. This is Protein-L-isoaspartate O-methyltransferase 2 (pcm2) from Archaeoglobus fulgidus (strain ATCC 49558 / DSM 4304 / JCM 9628 / NBRC 100126 / VC-16).